The following is a 404-amino-acid chain: Arginine biosynthesis bifunctional protein ArgJ (404 aa).

6 residues coordinate substrate: Thr-156, Lys-182, Thr-193, Glu-277, Asn-399, and Ser-404. Residue Thr-193 is the Nucleophile of the active site.

The protein belongs to the ArgJ family. As to quaternary structure, heterotetramer of two alpha and two beta chains.

It is found in the cytoplasm. The catalysed reaction is N(2)-acetyl-L-ornithine + L-glutamate = N-acetyl-L-glutamate + L-ornithine. The enzyme catalyses L-glutamate + acetyl-CoA = N-acetyl-L-glutamate + CoA + H(+). The protein operates within amino-acid biosynthesis; L-arginine biosynthesis; L-ornithine and N-acetyl-L-glutamate from L-glutamate and N(2)-acetyl-L-ornithine (cyclic): step 1/1. Its pathway is amino-acid biosynthesis; L-arginine biosynthesis; N(2)-acetyl-L-ornithine from L-glutamate: step 1/4. In terms of biological role, catalyzes two activities which are involved in the cyclic version of arginine biosynthesis: the synthesis of N-acetylglutamate from glutamate and acetyl-CoA as the acetyl donor, and of ornithine by transacetylation between N(2)-acetylornithine and glutamate. This is Arginine biosynthesis bifunctional protein ArgJ from Chlorobaculum tepidum (strain ATCC 49652 / DSM 12025 / NBRC 103806 / TLS) (Chlorobium tepidum).